Here is a 298-residue protein sequence, read N- to C-terminus: Acetyl-coenzyme A carboxylase carboxyl transferase subunit beta (298 aa).

Positions 1-21 (MNQEVKSGKVLSPSTPWTQRP) are disordered. In terms of domain architecture, CoA carboxyltransferase N-terminal spans 41 to 298 (PTIECPECHA…RLVSKLMNLP (258 aa)). 4 residues coordinate Zn(2+): Cys45, Cys48, Cys64, and Cys67. The segment at 45–67 (CPECHALVTRTAISFNAYVCPQC) adopts a C4-type zinc-finger fold.

The protein belongs to the AccD/PCCB family. In terms of assembly, acetyl-CoA carboxylase is a heterohexamer composed of biotin carboxyl carrier protein (AccB), biotin carboxylase (AccC) and two subunits each of ACCase subunit alpha (AccA) and ACCase subunit beta (AccD). Requires Zn(2+) as cofactor.

It is found in the cytoplasm. It carries out the reaction N(6)-carboxybiotinyl-L-lysyl-[protein] + acetyl-CoA = N(6)-biotinyl-L-lysyl-[protein] + malonyl-CoA. Its pathway is lipid metabolism; malonyl-CoA biosynthesis; malonyl-CoA from acetyl-CoA: step 1/1. In terms of biological role, component of the acetyl coenzyme A carboxylase (ACC) complex. Biotin carboxylase (BC) catalyzes the carboxylation of biotin on its carrier protein (BCCP) and then the CO(2) group is transferred by the transcarboxylase to acetyl-CoA to form malonyl-CoA. This Acinetobacter baumannii (strain AYE) protein is Acetyl-coenzyme A carboxylase carboxyl transferase subunit beta.